The following is a 199-amino-acid chain: Small ribosomal subunit protein uS4 (199 aa).

The S4 RNA-binding domain maps to Arg106 to Ile170. Residues Pro177–Glu199 form a disordered region.

It belongs to the universal ribosomal protein uS4 family. As to quaternary structure, part of the 30S ribosomal subunit. Contacts protein S5. The interaction surface between S4 and S5 is involved in control of translational fidelity.

Its function is as follows. One of the primary rRNA binding proteins, it binds directly to 16S rRNA where it nucleates assembly of the body of the 30S subunit. Functionally, with S5 and S12 plays an important role in translational accuracy. This Thermoplasma acidophilum (strain ATCC 25905 / DSM 1728 / JCM 9062 / NBRC 15155 / AMRC-C165) protein is Small ribosomal subunit protein uS4.